Here is a 339-residue protein sequence, read N- to C-terminus: Phosphate acyltransferase (339 aa).

This sequence belongs to the PlsX family. In terms of assembly, homodimer. Probably interacts with PlsY.

It is found in the cytoplasm. It carries out the reaction a fatty acyl-[ACP] + phosphate = an acyl phosphate + holo-[ACP]. It participates in lipid metabolism; phospholipid metabolism. Functionally, catalyzes the reversible formation of acyl-phosphate (acyl-PO(4)) from acyl-[acyl-carrier-protein] (acyl-ACP). This enzyme utilizes acyl-ACP as fatty acyl donor, but not acyl-CoA. The polypeptide is Phosphate acyltransferase (Vesicomyosocius okutanii subsp. Calyptogena okutanii (strain HA)).